Reading from the N-terminus, the 25-residue chain is Caerin-1.17 (25 aa).

Leu25 is subject to Leucine amide.

Belongs to the frog skin active peptide (FSAP) family. Caerin subfamily. Expressed by the skin dorsal glands.

It localises to the secreted. Functionally, caerin-1.17 shows significant activity against Gram-positive organisms, but is less effective against Gram-negative organisms. This chain is Caerin-1.17, found in Ranoidea gracilenta (Dainty green tree frog).